The chain runs to 417 residues: Serpin H1 (417 aa).

Positions 1-18 (MRSLLLLSAFCLLEAALA) are cleaved as a signal peptide. N6-succinyllysine is present on K94. N-linked (GlcNAc...) asparagine glycosylation is found at N120 and N125. S141 is modified (phosphoserine). The residue at position 206 (K206) is an N6-acetyllysine. K295 bears the N6-succinyllysine mark. Position 318 is an N6-acetyllysine (K318). The Prevents secretion from ER signature appears at 414-417 (RDEL).

Belongs to the serpin family.

Its subcellular location is the endoplasmic reticulum lumen. Its function is as follows. Binds specifically to collagen. Could be involved as a chaperone in the biosynthetic pathway of collagen. The chain is Serpin H1 (SERPINH1) from Pongo abelii (Sumatran orangutan).